Consider the following 37-residue polypeptide: Large ribosomal subunit protein bL36 (37 aa).

This sequence belongs to the bacterial ribosomal protein bL36 family.

This Thermomicrobium roseum (strain ATCC 27502 / DSM 5159 / P-2) protein is Large ribosomal subunit protein bL36.